We begin with the raw amino-acid sequence, 318 residues long: Biotin synthase (318 aa).

The region spanning 44-273 (LCGNKFDLCT…TVQIRLAGGR (230 aa)) is the Radical SAM core domain. Residues Cys-62, Cys-66, and Cys-69 each contribute to the [4Fe-4S] cluster site. [2Fe-2S] cluster contacts are provided by Ser-106, Cys-138, Cys-198, and Arg-268.

This sequence belongs to the radical SAM superfamily. Biotin synthase family. Homodimer. The cofactor is [4Fe-4S] cluster. [2Fe-2S] cluster serves as cofactor.

It catalyses the reaction (4R,5S)-dethiobiotin + (sulfur carrier)-SH + 2 reduced [2Fe-2S]-[ferredoxin] + 2 S-adenosyl-L-methionine = (sulfur carrier)-H + biotin + 2 5'-deoxyadenosine + 2 L-methionine + 2 oxidized [2Fe-2S]-[ferredoxin]. It participates in cofactor biosynthesis; biotin biosynthesis; biotin from 7,8-diaminononanoate: step 2/2. Catalyzes the conversion of dethiobiotin (DTB) to biotin by the insertion of a sulfur atom into dethiobiotin via a radical-based mechanism. The polypeptide is Biotin synthase (Clostridium botulinum (strain Langeland / NCTC 10281 / Type F)).